A 105-amino-acid polypeptide reads, in one-letter code: Large ribosomal subunit protein bL21c (105 aa).

The protein belongs to the bacterial ribosomal protein bL21 family. Part of the 50S ribosomal subunit.

It localises to the plastid. The protein localises to the chloroplast. This protein binds to 23S rRNA. In Trieres chinensis (Marine centric diatom), this protein is Large ribosomal subunit protein bL21c.